The primary structure comprises 386 residues: ADP,ATP carrier protein 1, mitochondrial (386 aa).

The transit peptide at 1 to 76 (MDQVQHPSVM…PSTASAICVQ (76 aa)) directs the protein to the mitochondrion. Solcar repeat units lie at residues 84–177 (SSFA…FKRL), 189–281 (KWFA…LKPV), and 289–375 (DSFF…LQLI). Helical transmembrane passes span 86–113 (FAID…VKLL), 154–178 (TANV…KRLF), 187–207 (YWKW…SSLL), 257–278 (FNIS…YDSL), and 292–312 (FASF…SYPI). ADP-binding residues include Arg159 and Lys171. An ADP-binding site is contributed by Arg316. Positions 316-321 (RRRMMM) are important for transport activity. The Nucleotide carrier signature motif motif lies at 316-321 (RRRMMM). Residues 352-372 (AGSNILRAIAGAGVLAGYDKL) form a helical membrane-spanning segment.

Belongs to the mitochondrial carrier (TC 2.A.29) family. In terms of assembly, monomer.

The protein localises to the mitochondrion inner membrane. It catalyses the reaction ADP(in) + ATP(out) = ADP(out) + ATP(in). The matrix-open state (m-state) is inhibited by the membrane-permeable bongkrekic acid (BKA). The cytoplasmic-open state (c-state) is inhibited by the membrane-impermeable toxic inhibitor carboxyatractyloside (CATR). In terms of biological role, ADP:ATP antiporter that mediates import of ADP into the mitochondrial matrix for ATP synthesis, and export of ATP out to fuel the cell. Cycles between the cytoplasmic-open state (c-state) and the matrix-open state (m-state): operates by the alternating access mechanism with a single substrate-binding site intermittently exposed to either the cytosolic (c-state) or matrix (m-state) side of the inner mitochondrial membrane. In Gossypium hirsutum (Upland cotton), this protein is ADP,ATP carrier protein 1, mitochondrial (ANT1).